A 352-amino-acid polypeptide reads, in one-letter code: Blue-sensitive opsin (352 aa).

Residues 1 to 42 are Extracellular-facing; the sequence is MRGNRLVEFPDDFWIPIPLDTNNVTALSPFLVPQDHLGSPTI. A glycan (N-linked (GlcNAc...) asparagine) is linked at asparagine 23. The helical transmembrane segment at 43-67 threads the bilayer; the sequence is FYSMSALMFVLFVAGTAINLLTIAC. Over 68-79 the chain is Cytoplasmic; the sequence is TLQYKKLRSHLN. A helical transmembrane segment spans residues 80-105; that stretch reads YILVNMAVANLIVASTGSSTCFVCFA. Residues 106-119 are Extracellular-facing; the sequence is FKYMVLGPLGCKIE. Cysteine 116 and cysteine 193 are disulfide-bonded. Residues 120–139 traverse the membrane as a helical segment; it reads GFTAALGGMVSLWSLAVIAF. Residues 140-158 lie on the Cytoplasmic side of the membrane; sequence ERWLVICKPLGNFVFKSEH. Residues 159–182 form a helical membrane-spanning segment; that stretch reads ALLCCALTWVCGLCASVPPLVGWS. Topologically, residues 183-208 are extracellular; the sequence is RYIPEGMQCSCGPDWYTTGNKFNNES. Residue asparagine 206 is glycosylated (N-linked (GlcNAc...) asparagine). Residues 209–236 traverse the membrane as a helical segment; the sequence is FVMFLFCFCFAVPFSIIVFCYSQLLFTL. Residues 237 to 258 are Cytoplasmic-facing; sequence KMAAKAQADSASTQKAEKEVTR. Residues 259–282 traverse the membrane as a helical segment; sequence MVVVMVVAFLVCYVPYASFALWVI. Residues 283 to 290 are Extracellular-facing; that stretch reads NNRGQTFD. Residues 291–315 form a helical membrane-spanning segment; it reads LRLATIPSCVSKASTVYNPVIYVLL. The residue at position 302 (lysine 302) is an N6-(retinylidene)lysine. Over 316 to 352 the chain is Cytoplasmic; the sequence is NKQFRLCMKKMLGMSADEDEESSTSQSTTEVSKVGPS. Positions 332–352 are disordered; sequence DEDEESSTSQSTTEVSKVGPS.

This sequence belongs to the G-protein coupled receptor 1 family. Opsin subfamily. In terms of processing, phosphorylated on some or all of the serine and threonine residues present in the C-terminal region. The color pigments are found in the cone photoreceptor cells.

The protein resides in the membrane. In terms of biological role, visual pigments are the light-absorbing molecules that mediate vision. They consist of an apoprotein, opsin, covalently linked to cis-retinal. The polypeptide is Blue-sensitive opsin (Oryzias latipes (Japanese rice fish)).